We begin with the raw amino-acid sequence, 85 residues long: MATKKAGGSTKNGRDSNPKMLGVKVYGGQTVTAGNIIVRQRGTEFHAGANVGMGRDHTLFATADGVVKFEVKGQFGRRYVKVETV.

Positions M1–M20 are disordered.

It belongs to the bacterial ribosomal protein bL27 family.

This Acinetobacter baumannii (strain AB307-0294) protein is Large ribosomal subunit protein bL27.